The primary structure comprises 254 residues: Triosephosphate isomerase (254 aa).

Residue 10–12 (NWK) coordinates substrate. H99 (electrophile) is an active-site residue. E169 functions as the Proton acceptor in the catalytic mechanism. Substrate contacts are provided by residues G175, S215, and 236 to 237 (GG).

Belongs to the triosephosphate isomerase family. Homodimer.

It is found in the cytoplasm. It carries out the reaction D-glyceraldehyde 3-phosphate = dihydroxyacetone phosphate. The protein operates within carbohydrate biosynthesis; gluconeogenesis. It participates in carbohydrate degradation; glycolysis; D-glyceraldehyde 3-phosphate from glycerone phosphate: step 1/1. Its function is as follows. Involved in the gluconeogenesis. Catalyzes stereospecifically the conversion of dihydroxyacetone phosphate (DHAP) to D-glyceraldehyde-3-phosphate (G3P). The polypeptide is Triosephosphate isomerase (Chlamydia caviae (strain ATCC VR-813 / DSM 19441 / 03DC25 / GPIC) (Chlamydophila caviae)).